A 167-amino-acid chain; its full sequence is Large ribosomal subunit protein uL10 (167 aa).

This sequence belongs to the universal ribosomal protein uL10 family. As to quaternary structure, part of the ribosomal stalk of the 50S ribosomal subunit. The N-terminus interacts with L11 and the large rRNA to form the base of the stalk. The C-terminus forms an elongated spine to which L12 dimers bind in a sequential fashion forming a multimeric L10(L12)X complex.

Functionally, forms part of the ribosomal stalk, playing a central role in the interaction of the ribosome with GTP-bound translation factors. The polypeptide is Large ribosomal subunit protein uL10 (Flavobacterium johnsoniae (strain ATCC 17061 / DSM 2064 / JCM 8514 / BCRC 14874 / CCUG 350202 / NBRC 14942 / NCIMB 11054 / UW101) (Cytophaga johnsonae)).